Consider the following 123-residue polypeptide: Fluoride-specific ion channel FluC (123 aa).

The next 4 membrane-spanning stretches (helical) occupy residues 7–27 (LLLI…SGIL), 39–59 (LVNS…FFGF), 67–87 (IFLG…SYET), and 100–120 (FMNV…GFIL). Positions 75 and 78 each coordinate Na(+).

It belongs to the fluoride channel Fluc/FEX (TC 1.A.43) family.

It is found in the cell membrane. It catalyses the reaction fluoride(in) = fluoride(out). With respect to regulation, na(+) is not transported, but it plays an essential structural role and its presence is essential for fluoride channel function. Functionally, fluoride-specific ion channel. Important for reducing fluoride concentration in the cell, thus reducing its toxicity. The sequence is that of Fluoride-specific ion channel FluC from Pyrococcus abyssi (strain GE5 / Orsay).